The chain runs to 340 residues: Ribonucleoside-diphosphate reductase subunit beta (340 aa).

Fe cation is bound by residues Asp-88 and His-122. The active site involves Tyr-126. Residue His-216 coordinates Fe cation.

It belongs to the ribonucleoside diphosphate reductase small chain family. In terms of assembly, tetramer of two alpha and two beta subunits. Fe cation serves as cofactor.

The enzyme catalyses a 2'-deoxyribonucleoside 5'-diphosphate + [thioredoxin]-disulfide + H2O = a ribonucleoside 5'-diphosphate + [thioredoxin]-dithiol. Its function is as follows. Provides the precursors necessary for DNA synthesis. Catalyzes the biosynthesis of deoxyribonucleotides from the corresponding ribonucleotides. The chain is Ribonucleoside-diphosphate reductase subunit beta (nrdF) from Mycoplasma genitalium (strain ATCC 33530 / DSM 19775 / NCTC 10195 / G37) (Mycoplasmoides genitalium).